Consider the following 97-residue polypeptide: Co-chaperonin GroES (97 aa).

This sequence belongs to the GroES chaperonin family. As to quaternary structure, heptamer of 7 subunits arranged in a ring. Interacts with the chaperonin GroEL.

It localises to the cytoplasm. In terms of biological role, together with the chaperonin GroEL, plays an essential role in assisting protein folding. The GroEL-GroES system forms a nano-cage that allows encapsulation of the non-native substrate proteins and provides a physical environment optimized to promote and accelerate protein folding. GroES binds to the apical surface of the GroEL ring, thereby capping the opening of the GroEL channel. This chain is Co-chaperonin GroES, found in Sodalis glossinidius (strain morsitans).